We begin with the raw amino-acid sequence, 186 residues long: Membrane protein Rv1476 (186 aa).

A helical transmembrane segment spans residues 138 to 158 (FPWSALTIVLLIGVLAAAVGA). The interval 166 to 186 (RRSATSTDAAPGAGDDLNQGV) is disordered.

Its subcellular location is the membrane. In terms of biological role, may affect the expression of genes linked to host macrophage apoptosis and immune response, thereby promoting the survival of M.tuberculosis in host macrophages. Overexpression of the gene increases susceptibility of the bacteria to various stresses, but promotes intracellular survival in host macrophages. It has no impact on the growth rate in vitro. Overexpression causes changes in the transcriptome of THP-1 cells, including expression of genes involved in cell proliferation, fatty acid degradation, cytokine-cytokine receptor interaction and immune response pathways. The polypeptide is Membrane protein Rv1476 (Mycobacterium tuberculosis (strain ATCC 25618 / H37Rv)).